Reading from the N-terminus, the 497-residue chain is tRNA-2-methylthio-N(6)-dimethylallyladenosine synthase (497 aa).

Residues 44–161 (KKVFVTTQGC…LPELYDQSHQ (118 aa)) form the MTTase N-terminal domain. Positions 53, 90, 124, 205, 209, and 212 each coordinate [4Fe-4S] cluster. Positions 191-423 (RVEGFKAFVS…QKVIIDSTLA (233 aa)) constitute a Radical SAM core domain. A TRAM domain is found at 426–494 (HEMVGTTTRV…PHMVKGEIEA (69 aa)).

It belongs to the methylthiotransferase family. MiaB subfamily. As to quaternary structure, monomer. [4Fe-4S] cluster serves as cofactor.

Its subcellular location is the cytoplasm. The catalysed reaction is N(6)-dimethylallyladenosine(37) in tRNA + (sulfur carrier)-SH + AH2 + 2 S-adenosyl-L-methionine = 2-methylsulfanyl-N(6)-dimethylallyladenosine(37) in tRNA + (sulfur carrier)-H + 5'-deoxyadenosine + L-methionine + A + S-adenosyl-L-homocysteine + 2 H(+). Its function is as follows. Catalyzes the methylthiolation of N6-(dimethylallyl)adenosine (i(6)A), leading to the formation of 2-methylthio-N6-(dimethylallyl)adenosine (ms(2)i(6)A) at position 37 in tRNAs that read codons beginning with uridine. This Psychrobacter cryohalolentis (strain ATCC BAA-1226 / DSM 17306 / VKM B-2378 / K5) protein is tRNA-2-methylthio-N(6)-dimethylallyladenosine synthase.